The primary structure comprises 143 residues: Transcriptional regulator MraZ (143 aa).

SpoVT-AbrB domains follow at residues 5 to 47 and 76 to 119; these read THTP…PRAE and TDEQ…DAQA.

It belongs to the MraZ family. Forms oligomers.

The protein resides in the cytoplasm. It is found in the nucleoid. This chain is Transcriptional regulator MraZ, found in Mycobacterium leprae (strain Br4923).